Consider the following 92-residue polypeptide: Long neurotoxin 1 (92 aa).

The signal sequence occupies residues 1 to 21 (MKILLLTLVVVTIVCLDLAYT). Disulfide bonds link cysteine 24-cysteine 41, cysteine 34-cysteine 62, cysteine 47-cysteine 51, cysteine 66-cysteine 77, and cysteine 78-cysteine 83.

The protein belongs to the three-finger toxin family. Long-chain subfamily. Type II alpha-neurotoxin sub-subfamily. Expressed by the venom gland.

The protein resides in the secreted. In terms of biological role, binds with high affinity to muscular (alpha-1/CHRNA1) and neuronal (alpha-7/CHRNA7) nicotinic acetylcholine receptor (nAChR) and inhibits acetylcholine from binding to the receptor, thereby impairing neuromuscular and neuronal transmission. The polypeptide is Long neurotoxin 1 (Hydrophis hardwickii (Hardwick's spine-bellied seasnake)).